Consider the following 45-residue polypeptide: Omega-hexatoxin-Hv2a (45 aa).

Cystine bridges form between C4–C18, C11–C24, and C17–C29.

This sequence belongs to the neurotoxin 15 family. 02 (omega-actx) subfamily. Expressed by the venom gland.

The protein resides in the secreted. In terms of biological role, potent inhibitor of insect (bee brain), but not mammalian (rat trigeminal neurons), voltage-gated calcium channels (Cav). In vivo, injection into lone star ticks (Amblyomma americanum) induces curling of all eight legs into closed loops, followed by death. The sequence is that of Omega-hexatoxin-Hv2a from Hadronyche versuta (Blue mountains funnel-web spider).